The chain runs to 706 residues: Mitochondrial intermediate peptidase, mitochondrial (706 aa).

The N-terminal 29 residues, 1-29, are a transit peptide targeting the mitochondrion; sequence MWKLTRRLQPHINSTRWLVRNFRNGGAGD. The tract at residues 212–238 is disordered; the sequence is NPTYRSTSGGSRGSTRSAHKSKQKGFR. The span at 214–227 shows a compositional bias: low complexity; the sequence is TYRSTSGGSRGSTR. Residue histidine 491 participates in Zn(2+) binding. Residue glutamate 492 is part of the active site. Zn(2+)-binding residues include histidine 495 and glutamate 520.

The protein belongs to the peptidase M3 family. Requires Zn(2+) as cofactor.

The protein resides in the mitochondrion. In terms of biological role, aminopeptidase which cleaves preproteins, imported into the mitochondrion, to their mature size. Could cleave both preproteins and preprotein intermediates already cleaved by the mitochondrial processing peptidase (MPP). In Arabidopsis thaliana (Mouse-ear cress), this protein is Mitochondrial intermediate peptidase, mitochondrial.